We begin with the raw amino-acid sequence, 73 residues long: Kazal peptide Pr13a (73 aa).

An N-terminal signal peptide occupies residues 1 to 20; that stretch reads MKYIILFLVLIGLQANLALG. Positions 21–73 constitute a Kazal-like domain; it reads SKCKCDCTKYPYSPVCAKELKTGDTETFNNVCQLQCYNCTHMKNYVVIYSGSC. 3 disulfides stabilise this stretch: Cys23–Cys59, Cys27–Cys52, and Cys36–Cys73.

In terms of tissue distribution, expressed by the venom gland (anterior main gland) (at protein level).

It is found in the secreted. Functionally, may act as a serine protease inhibitor, since it possess the kazal serine protease inhibitor signature. This is Kazal peptide Pr13a from Platymeris rhadamanthus (Red spot assassin bug).